Consider the following 89-residue polypeptide: Small ribosomal subunit protein uS15 (89 aa).

The segment covering 1–11 (MSITAERKAEV) has biased composition (basic and acidic residues). A disordered region spans residues 1 to 25 (MSITAERKAEVIKTNARKSGDTGSP).

This sequence belongs to the universal ribosomal protein uS15 family. In terms of assembly, part of the 30S ribosomal subunit. Forms a bridge to the 50S subunit in the 70S ribosome, contacting the 23S rRNA.

Functionally, one of the primary rRNA binding proteins, it binds directly to 16S rRNA where it helps nucleate assembly of the platform of the 30S subunit by binding and bridging several RNA helices of the 16S rRNA. In terms of biological role, forms an intersubunit bridge (bridge B4) with the 23S rRNA of the 50S subunit in the ribosome. This chain is Small ribosomal subunit protein uS15, found in Nitrobacter hamburgensis (strain DSM 10229 / NCIMB 13809 / X14).